The chain runs to 348 residues: RNA 3'-terminal phosphate cyclase (348 aa).

Residues Gln-101 and 286 to 289 each bind ATP; that span reads HMAD. His-312 acts as the Tele-AMP-histidine intermediate in catalysis.

Belongs to the RNA 3'-terminal cyclase family. Type 1 subfamily.

It localises to the cytoplasm. It catalyses the reaction a 3'-end 3'-phospho-ribonucleotide-RNA + ATP = a 3'-end 2',3'-cyclophospho-ribonucleotide-RNA + AMP + diphosphate. Functionally, catalyzes the conversion of 3'-phosphate to a 2',3'-cyclic phosphodiester at the end of RNA. The mechanism of action of the enzyme occurs in 3 steps: (A) adenylation of the enzyme by ATP; (B) transfer of adenylate to an RNA-N3'P to produce RNA-N3'PP5'A; (C) and attack of the adjacent 2'-hydroxyl on the 3'-phosphorus in the diester linkage to produce the cyclic end product. The biological role of this enzyme is unknown but it is likely to function in some aspects of cellular RNA processing. In Pyrobaculum aerophilum (strain ATCC 51768 / DSM 7523 / JCM 9630 / CIP 104966 / NBRC 100827 / IM2), this protein is RNA 3'-terminal phosphate cyclase.